Consider the following 414-residue polypeptide: Glutamyl-tRNA reductase (414 aa).

Substrate is bound by residues 47–50, Ser106, 111–113, and Gln117; these read TCNR and EAQ. The Nucleophile role is filled by Cys48. 185–190 contacts NADP(+); sequence GAGRTG.

It belongs to the glutamyl-tRNA reductase family. As to quaternary structure, homodimer.

The enzyme catalyses (S)-4-amino-5-oxopentanoate + tRNA(Glu) + NADP(+) = L-glutamyl-tRNA(Glu) + NADPH + H(+). It participates in porphyrin-containing compound metabolism; protoporphyrin-IX biosynthesis; 5-aminolevulinate from L-glutamyl-tRNA(Glu): step 1/2. In terms of biological role, catalyzes the NADPH-dependent reduction of glutamyl-tRNA(Glu) to glutamate 1-semialdehyde (GSA). The protein is Glutamyl-tRNA reductase of Herpetosiphon aurantiacus (strain ATCC 23779 / DSM 785 / 114-95).